Consider the following 465-residue polypeptide: Serine/threonine-protein kinase 38 (465 aa).

At A2 the chain carries N-acetylalanine. The interval 62–87 (KRLRRSAHARKETEFLRLKRTRLGLE) is interaction with S100B. A Phosphothreonine modification is found at T74. One can recognise a Protein kinase domain in the interval 89–382 (FESLKVIGRG…VEEIKNNLFF (294 aa)). Residues 95-103 (IGRGAFGEV) and K118 each bind ATP. D212 functions as the Proton acceptor in the catalytic mechanism. S264 is modified (phosphoserine). At S281 the chain carries Phosphoserine; by autocatalysis. The UFM1-interacting motif (UFIM) motif lies at 306–311 (WSLGVI). One can recognise an AGC-kinase C-terminal domain in the interval 383-455 (EGVDWEHIRE…KRFEGLTARG (73 aa)). T444 is subject to Phosphothreonine; by STK24/MST3.

The protein belongs to the protein kinase superfamily. AGC Ser/Thr protein kinase family. Homodimeric S100B binds two molecules of STK38. Interacts with MOB1 and MOB2. Interacts with MAP3K1 and MAP3K2 (via the kinase catalytic domain). Forms a tripartite complex with MOBKL1B and STK3/MST2. Interacts with MICAL1; leading to inhibit the protein kinase activity by antagonizing activation by MST1/STK4. It depends on Mg(2+) as a cofactor. In terms of processing, ISGylated. Phosphorylated by STK3/MST2 and this is enhanced by MOBKL1B. As to expression, expressed at high levels in spleen, lung, thymus, brain and fat tissue.

Its subcellular location is the nucleus. The protein localises to the cytoplasm. It is found in the chromosome. It carries out the reaction L-seryl-[protein] + ATP = O-phospho-L-seryl-[protein] + ADP + H(+). It catalyses the reaction L-threonyl-[protein] + ATP = O-phospho-L-threonyl-[protein] + ADP + H(+). Activated by binding of S100B which releases autoinhibitory N-lobe interactions, enabling ATP to bind and the autophosphorylation of Ser-281. Thr-444 then undergoes calcium-dependent phosphorylation by STK24/MST3. Interactions between phosphorylated Thr-444 and the N-lobe promote additional structural changes that complete the activation of the kinase. Autoinhibition is also released by the binding of MOB1/MOBKL1A and MOB2/HCCA2 to the N-terminal of STK38. Functionally, serine/threonine-protein kinase that acts as a negative regulator of MAP3K1/2 signaling. Converts MAP3K2 from its phosphorylated form to its non-phosphorylated form and inhibits autophosphorylation of MAP3K2. Acts as an ufmylation 'reader' in a kinase-independent manner: specifically recognizes and binds mono-ufmylated histone H4 in response to DNA damage, promoting the recruitment of SUV39H1 to the double-strand breaks, resulting in ATM activation. In Mus musculus (Mouse), this protein is Serine/threonine-protein kinase 38.